A 405-amino-acid polypeptide reads, in one-letter code: Pulcherriminic acid synthase (405 aa).

The heme site is built by K62, N229, R285, and C353.

The protein belongs to the cytochrome P450 family. Homodimer. Heme is required as a cofactor.

It catalyses the reaction cyclo(L-leucyl-L-leucyl) + 6 reduced [2Fe-2S]-[ferredoxin] + 3 O2 + 4 H(+) = pulcherriminic acid + 6 oxidized [2Fe-2S]-[ferredoxin] + 4 H2O. In terms of biological role, involved in the biosynthesis of pulcherrimin, a red extracellular pigment. Catalyzes the oxidation of cyclo(L-Leu-L-Leu) (cLL) to yield pulcherriminic acid which forms pulcherrimin via a nonenzymic reaction with Fe(3+). Substrates with small alkyl groups (cAA, cLG, cLP) exhibit weaker binding to CYP134A1, but substrates with larger hydrophobic side chains bind in a similar regime to cLL. This chain is Pulcherriminic acid synthase (cypX), found in Bacillus subtilis (strain 168).